The primary structure comprises 283 residues: Small ribosomal subunit protein uS2 (283 aa).

Residues 229–283 form a disordered region; the sequence is RSAGKSGEQPAEAEPMPDWERELLEGDGAKTEAKAEEPKAEAKKADEAPEAEKSN. Basic and acidic residues predominate over residues 246–283; that stretch reads DWERELLEGDGAKTEAKAEEPKAEAKKADEAPEAEKSN.

It belongs to the universal ribosomal protein uS2 family.

The sequence is that of Small ribosomal subunit protein uS2 from Cutibacterium acnes (strain DSM 16379 / KPA171202) (Propionibacterium acnes).